A 252-amino-acid chain; its full sequence is MAAASLAVFCRRVSAALKASTSLISSQTLASTGCRFSLSLLTKNTPNVTSFHQCRLLQTTLSRRGLEEFFDDPKNWGEEKVKSGASWTCQQLRNKSNEDLHKLWYVLLKERNMLLTLEQEAKRQRLPMPSPERLEKVVDSMDALDKVVQEREDALRLLQTGQEKPRPGAWRRDIFGRIIWHKFKQWPIPWYLNKRYNRKRFFAMPYVERFVRLRIEKQARIKARKISLTQKKEKFLQKKFPHLSEAQKSSAA.

Lys146 bears the N6-acetyllysine mark.

The protein belongs to the universal ribosomal protein uL29 family. In terms of assembly, component of the mitochondrial ribosome large subunit (39S) which comprises a 16S rRNA and about 50 distinct proteins.

The protein localises to the mitochondrion. This is Large ribosomal subunit protein uL29m (MRPL47) from Bos taurus (Bovine).